A 288-amino-acid polypeptide reads, in one-letter code: Bifunctional protein FolD (288 aa).

NADP(+) contacts are provided by residues 166–168 and isoleucine 232; that span reads GAS.

Belongs to the tetrahydrofolate dehydrogenase/cyclohydrolase family. In terms of assembly, homodimer.

The enzyme catalyses (6R)-5,10-methylene-5,6,7,8-tetrahydrofolate + NADP(+) = (6R)-5,10-methenyltetrahydrofolate + NADPH. It catalyses the reaction (6R)-5,10-methenyltetrahydrofolate + H2O = (6R)-10-formyltetrahydrofolate + H(+). The protein operates within one-carbon metabolism; tetrahydrofolate interconversion. In terms of biological role, catalyzes the oxidation of 5,10-methylenetetrahydrofolate to 5,10-methenyltetrahydrofolate and then the hydrolysis of 5,10-methenyltetrahydrofolate to 10-formyltetrahydrofolate. This is Bifunctional protein FolD from Escherichia coli (strain SMS-3-5 / SECEC).